The primary structure comprises 138 residues: Large ribosomal subunit protein uL16 (138 aa).

Positions 1-13 (MLQPSRRKFRKEQ) are enriched in basic residues. A disordered region spans residues 1 to 22 (MLQPSRRKFRKEQKGRNTGIAT).

The protein belongs to the universal ribosomal protein uL16 family. Part of the 50S ribosomal subunit.

In terms of biological role, binds 23S rRNA and is also seen to make contacts with the A and possibly P site tRNAs. The chain is Large ribosomal subunit protein uL16 from Methylibium petroleiphilum (strain ATCC BAA-1232 / LMG 22953 / PM1).